Here is a 481-residue protein sequence, read N- to C-terminus: MIQVLLVTICLAVFPYQGSSIILESGNVDDYEVVYPRKVTALPKGAVQPKYEDAMQYEFKVNGEAVVLHLEKNKGLFSEDYSETHYSPDGREITTYPSVEDHCYYHGRIHNDADSTASISACDGLKGYFKLQGETYLIEPLELSDSEAHAVFKYENVEKEDEAPKMCGVTQNWESDESIKKASQLYLTPEQQRFPQRYIKLAIVVDHGMYTKYSSNFKKIRKRVHQMVSNINEMCRPLNIAITLALLDVWSEKDFITVQADAPTTAGLFGDWRERVLLKKKNHDHAQLLTDTNFARNTIGWAYLGRMCDEKYSVGVVQDHSSKVFMVAVTMTHELGHNLGMEHDDKDKCKCEACIMSAVISDKQSKLFSDCSKDYYQTFLTNDNPQCILNAPLRTDTVSTPVSGNEFLEAGEECDCGSPENPCCDAATCKLRPGAQCADGLCCDQCRFIEEGIICRRARGDDLDDYCNGISGDCPRNPFHA.

The signal sequence occupies residues 1–20 (MIQVLLVTICLAVFPYQGSS). Residues 21 to 190 (IILESGNVDD…KASQLYLTPE (170 aa)) constitute a propeptide that is removed on maturation. A Peptidase M12B domain is found at 197-392 (RYIKLAIVVD…DNPQCILNAP (196 aa)). 3 cysteine pairs are disulfide-bonded: C308-C387, C349-C371, and C351-C354. Zn(2+) is bound at residue H333. E334 is a catalytic residue. 2 residues coordinate Zn(2+): H337 and H343. A propeptide spanning residues 393 to 408 (LRTDTVSTPVSGNEFL) is cleaved from the precursor. Positions 400–481 (TPVSGNEFLE…GDCPRNPFHA (82 aa)) constitute a Disintegrin domain. Cystine bridges form between C414–C429, C416–C424, C423–C446, C437–C443, C442–C467, and C455–C474. The Cell attachment site signature appears at 459–461 (RGD).

Belongs to the venom metalloproteinase (M12B) family. P-II subfamily. P-IIa sub-subfamily. In terms of assembly, monomer. The cofactor is Zn(2+). In terms of tissue distribution, expressed by the venom gland.

Its subcellular location is the secreted. Impairs hemostasis in the envenomed animal. Its function is as follows. Disintegrin elegantin-2a-f: inhibits platelet aggregation induced by ADP, thrombin, platelet-activating factor and collagen. Acts by inhibiting fibrinogen interaction with platelet receptors GPIIb/GPIIIa (ITGA2B/ITGB3). The sequence is that of Zinc metalloproteinase/disintegrin from Protobothrops elegans (Elegant pitviper).